Consider the following 183-residue polypeptide: Adenine phosphoribosyltransferase (183 aa).

It belongs to the purine/pyrimidine phosphoribosyltransferase family. In terms of assembly, homodimer.

It is found in the cytoplasm. The catalysed reaction is AMP + diphosphate = 5-phospho-alpha-D-ribose 1-diphosphate + adenine. The protein operates within purine metabolism; AMP biosynthesis via salvage pathway; AMP from adenine: step 1/1. Its function is as follows. Catalyzes a salvage reaction resulting in the formation of AMP, that is energically less costly than de novo synthesis. The chain is Adenine phosphoribosyltransferase from Klebsiella pneumoniae (strain 342).